Consider the following 1054-residue polypeptide: Carbamoyl phosphate synthase large chain (1054 aa).

A carboxyphosphate synthetic domain region spans residues 1–402 (MPRRDDIRSI…SLLKAMASLE (402 aa)). ATP-binding residues include Arg129, Arg169, Gly175, Gly176, Arg208, Val210, Glu215, Gly241, Val242, His243, Gln285, and Glu299. The region spanning 133 to 328 (REAMERIGLR…IAKIAARLAV (196 aa)) is the ATP-grasp 1 domain. Gln285, Glu299, and Asn301 together coordinate Mg(2+). Positions 285, 299, and 301 each coordinate Mn(2+). Positions 403–531 (IETRDIQARL…YYYSTYEQED (129 aa)) are oligomerization domain. Positions 532–914 (EVERGENPSV…AFAKALAAAG (383 aa)) are carbamoyl phosphate synthetic domain. The ATP-grasp 2 domain maps to 658–849 (GRLLRELGIP…LARLATRVLL (192 aa)). ATP contacts are provided by Arg694, Lys733, Glu740, Gly765, Val766, His767, Ser768, Gln808, and Glu820. 3 residues coordinate Mg(2+): Gln808, Glu820, and Asn822. Residues Gln808, Glu820, and Asn822 each coordinate Mn(2+). The MGS-like domain maps to 915 to 1054 (QRLPESGRVY…SLQDLYAART (140 aa)). The segment at 915–1054 (QRLPESGRVY…SLQDLYAART (140 aa)) is allosteric domain.

The protein belongs to the CarB family. As to quaternary structure, composed of two chains; the small (or glutamine) chain promotes the hydrolysis of glutamine to ammonia, which is used by the large (or ammonia) chain to synthesize carbamoyl phosphate. Tetramer of heterodimers (alpha,beta)4. It depends on Mg(2+) as a cofactor. Requires Mn(2+) as cofactor.

The catalysed reaction is hydrogencarbonate + L-glutamine + 2 ATP + H2O = carbamoyl phosphate + L-glutamate + 2 ADP + phosphate + 2 H(+). It catalyses the reaction hydrogencarbonate + NH4(+) + 2 ATP = carbamoyl phosphate + 2 ADP + phosphate + 2 H(+). It functions in the pathway amino-acid biosynthesis; L-arginine biosynthesis; carbamoyl phosphate from bicarbonate: step 1/1. It participates in pyrimidine metabolism; UMP biosynthesis via de novo pathway; (S)-dihydroorotate from bicarbonate: step 1/3. In terms of biological role, large subunit of the glutamine-dependent carbamoyl phosphate synthetase (CPSase). CPSase catalyzes the formation of carbamoyl phosphate from the ammonia moiety of glutamine, carbonate, and phosphate donated by ATP, constituting the first step of 2 biosynthetic pathways, one leading to arginine and/or urea and the other to pyrimidine nucleotides. The large subunit (synthetase) binds the substrates ammonia (free or transferred from glutamine from the small subunit), hydrogencarbonate and ATP and carries out an ATP-coupled ligase reaction, activating hydrogencarbonate by forming carboxy phosphate which reacts with ammonia to form carbamoyl phosphate. The protein is Carbamoyl phosphate synthase large chain of Rubrobacter xylanophilus (strain DSM 9941 / JCM 11954 / NBRC 16129 / PRD-1).